We begin with the raw amino-acid sequence, 253 residues long: Complement C1q subcomponent subunit B (253 aa).

An N-terminal signal peptide occupies residues 1 to 25; it reads MKTQWGEVWTHLLLLLLGFLHVSWA. Glutamine 26 is subject to Pyrrolidone carboxylic acid. Positions 29-112 constitute a Collagen-like domain; sequence CTGPPGIPGI…GPRGPKGDSG (84 aa). Residues proline 33, proline 36, proline 39, proline 51, and proline 54 each carry the 4-hydroxyproline modification. Positions 35–115 are disordered; that stretch reads IPGIPGVPGV…GPKGDSGDYG (81 aa). Residues lysine 57 and lysine 60 each carry the 5-hydroxylysine modification. The residue at position 63 (proline 63) is a 4-hydroxyproline. The residue at position 75 (lysine 75) is a 5-hydroxylysine. Over residues 78 to 96 the composition is skewed to low complexity; the sequence is PGIPGTPGKVGPKGPVGPK. 2 positions are modified to 4-hydroxyproline: proline 81 and proline 84. 2 positions are modified to 5-hydroxylysine: lysine 90 and lysine 96. A 4-hydroxyproline modification is found at proline 99. Position 108 is a 5-hydroxylysine (lysine 108). In terms of domain architecture, C1q spans 115 to 253; sequence GATQKVAFSA…GFLLFPDMDA (139 aa). The cysteines at positions 179 and 198 are disulfide-linked. 3 residues coordinate Ca(2+): aspartate 199, tyrosine 200, and glutamine 206.

Core component of the complement C1 complex, a calcium-dependent complex composed of 1 molecule of the C1Q subcomplex, 2 molecules of C1R and 2 molecules of C1S. The C1Q subcomplex is composed 18 subunits: 3 chains of C1QA, C1QB, and C1QC trimerize to form 6 collagen-like triple helices connected to six globular ligand-recognition modules (C1q domain). In terms of processing, hydroxylated on lysine and proline residues. Hydroxylated lysine residues can be glycosylated. Mouse C1Q contains up to 64.0 hydroxylysine-galactosylglucose residues. Total percentage hydroxylysine residues glycosylated is 95.1%. Contains no hydroxylysine-monosaccharides. In terms of tissue distribution, highest expression in thioglycolate-activated peritoneal macrophages. Also found in spleen, thymus and heart. Very weak expression liver, kidney, lung and intestine.

The protein localises to the secreted. Its subcellular location is the cell surface. With respect to regulation, the C1Q subcomplex is inhibited by sulfated molecules, such as triterpenoid sulfates, heparan sulfate, or chondroitin sulfates. Core component of the complement C1 complex, a multiprotein complex that initiates the classical pathway of the complement system, a cascade of proteins that leads to phagocytosis and breakdown of pathogens and signaling that strengthens the adaptive immune system. The classical complement pathway is initiated by the C1Q subcomplex of the C1 complex, which specifically binds IgG or IgM immunoglobulins complexed with antigens, forming antigen-antibody complexes on the surface of pathogens: C1QA, together with C1QB and C1QC, specifically recognizes and binds the Fc regions of IgG or IgM via its C1q domain. Immunoglobulin-binding activates the proenzyme C1R, which cleaves C1S, initiating the proteolytic cascade of the complement system. The C1Q subcomplex is activated by a hexamer of IgG complexed with antigens, while it is activated by a pentameric IgM. The C1Q subcomplex also recognizes and binds phosphatidylserine exposed on the surface of cells undergoing programmed cell death, possibly promoting activation of the complement system. This Mus musculus (Mouse) protein is Complement C1q subcomponent subunit B.